Here is a 337-residue protein sequence, read N- to C-terminus: Anthraniloyl-CoA anthraniloyltransferase (337 aa).

The anthraniloyl-CoA site is built by T29 and F33. C113 functions as the Acyl-thioester intermediate in the catalytic mechanism. Residues R154–N155, M221–R224, and H258 each bind anthraniloyl-CoA.

This sequence belongs to the thiolase-like superfamily. FabH family. As to quaternary structure, homodimer.

It is found in the cytoplasm. It carries out the reaction anthraniloyl-CoA + malonyl-CoA + H(+) = (2-aminobenzoyl)acetyl-CoA + CO2 + CoA. Functionally, required for the biosynthesis of a number of signaling molecules, such as the quinolone signal 2-heptyl-3-hydroxy-4(1H)-quinolone (PQS), 2-heptyl-4-hydroxyquinoline (HHQ) and 2,4-dihydroxyquinoline (DHQ). These molecules are required for normal biofilm formation. Catalyzes the transfer of the anthraniloyl moiety from anthraniloyl-CoA to malonyl-CoA to form 2-aminobenzoylacetyl-CoA. The first step of the reaction is the formation of a covalent anthraniloyl-PqsD intermediate. Next, the short-lived intermediate 3-(2-aminophenyl)-3-oxopropanoyl-CoA is formed. An intramolecular rearrangement of this intermediate can give rise to 2,4-dihydroxyquinoline (DHQ). In Pseudomonas aeruginosa (strain ATCC 15692 / DSM 22644 / CIP 104116 / JCM 14847 / LMG 12228 / 1C / PRS 101 / PAO1), this protein is Anthraniloyl-CoA anthraniloyltransferase (pqsD).